A 120-amino-acid polypeptide reads, in one-letter code: Ubiquitin domain-containing protein TINCR (120 aa).

A Ubiquitin-like domain is found at 14–83 (YHIKVHLADE…LQDGSVLLLV (70 aa)).

In terms of tissue distribution, detected in stratum corneum (at protein level).

This is Ubiquitin domain-containing protein TINCR from Homo sapiens (Human).